The chain runs to 175 residues: Adenine phosphoribosyltransferase (175 aa).

This sequence belongs to the purine/pyrimidine phosphoribosyltransferase family. As to quaternary structure, homodimer.

The protein resides in the cytoplasm. It carries out the reaction AMP + diphosphate = 5-phospho-alpha-D-ribose 1-diphosphate + adenine. It participates in purine metabolism; AMP biosynthesis via salvage pathway; AMP from adenine: step 1/1. Catalyzes a salvage reaction resulting in the formation of AMP, that is energically less costly than de novo synthesis. The protein is Adenine phosphoribosyltransferase of Pelagibacter ubique (strain HTCC1062).